We begin with the raw amino-acid sequence, 194 residues long: Probable thymidylate kinase (194 aa).

Residue 7-14 (GIDGSGKT) coordinates ATP.

The protein belongs to the thymidylate kinase family.

It carries out the reaction dTMP + ATP = dTDP + ADP. This chain is Probable thymidylate kinase (tmk), found in Methanothermobacter thermautotrophicus (strain ATCC 29096 / DSM 1053 / JCM 10044 / NBRC 100330 / Delta H) (Methanobacterium thermoautotrophicum).